The sequence spans 2559 residues: Stabilin-2 (2559 aa).

A signal peptide spans 1 to 28; the sequence is MARSKLLLGKLLPLILIFLGLLVQNACS. Over 29–2464 the chain is Extracellular; it reads PTEAPELTKR…PPTAATAAHS (2436 aa). Asparagine 71 carries an N-linked (GlcNAc...) asparagine glycan. 5 consecutive EGF-like domains span residues 116–156, 164–201, 203–244, 245–284, and 330–370; these read DCME…TACE, FGPNCSAVCSCVHGVCNSGISGDGTCECLSAYRGPRCD, PIPE…QTCK, PINPCLKNVCHPHASCSYLGPNRHSCVCQKGYQGDGQVCL, and MTDI…LNCY. 3 disulfide bridges follow: cysteine 120–cysteine 134, cysteine 128–cysteine 144, and cysteine 146–cysteine 155. Asparagine 167 is a glycosylation site (N-linked (GlcNAc...) asparagine). 12 cysteine pairs are disulfide-bonded: cysteine 168/cysteine 179, cysteine 172/cysteine 189, cysteine 191/cysteine 200, cysteine 207/cysteine 218, cysteine 212/cysteine 230, cysteine 232/cysteine 243, cysteine 249/cysteine 260, cysteine 254/cysteine 270, cysteine 272/cysteine 283, cysteine 334/cysteine 346, cysteine 340/cysteine 356, and cysteine 358/cysteine 369. N-linked (GlcNAc...) asparagine glycosylation is present at asparagine 345. 2 consecutive FAS1 domains span residues 379–512 and 522–659; these read ELNT…DRAM and NPQQ…TGVL. N-linked (GlcNAc...) asparagine glycans are attached at residues asparagine 572, asparagine 626, asparagine 673, and asparagine 691. Residues 743–783 form the EGF-like 6 domain; sequence DCNPCPGGFMNPCSGNGQCIDGLGGNGTCICEDGFQGSRCQ. Intrachain disulfides connect cysteine 747–cysteine 761, cysteine 755–cysteine 771, and cysteine 773–cysteine 782. Residue asparagine 768 is glycosylated (N-linked (GlcNAc...) asparagine). Asparagine 796 carries an N-linked (GlcNAc...) asparagine glycan. EGF-like domains follow at residues 833-873, 874-917, 918-960, and 961-1002; these read QTSA…TLCS, KKDP…RDCV, EINS…IDCE, and PIIS…VLCY. 12 disulfides stabilise this stretch: cysteine 837–cysteine 850, cysteine 844–cysteine 859, cysteine 861–cysteine 872, cysteine 878–cysteine 893, cysteine 887–cysteine 903, cysteine 905–cysteine 916, cysteine 922–cysteine 936, cysteine 930–cysteine 946, cysteine 948–cysteine 959, cysteine 965–cysteine 978, cysteine 972–cysteine 988, and cysteine 990–cysteine 1001. The N-linked (GlcNAc...) asparagine glycan is linked to asparagine 854. Residue asparagine 933 is glycosylated (N-linked (GlcNAc...) asparagine). FAS1 domains are found at residues 1002–1135 and 1145–1273; these read YGNV…NKVL and LPSL…EKVL. Residues asparagine 1024, asparagine 1036, asparagine 1108, asparagine 1255, and asparagine 1283 are each glycosylated (N-linked (GlcNAc...) asparagine). The Laminin EGF-like 1 domain maps to 1350–1415; the sequence is PQCQACPGKG…CSCVHGRCNQ (66 aa). Cystine bridges form between cysteine 1355–cysteine 1369, cysteine 1363–cysteine 1379, cysteine 1381–cysteine 1390, cysteine 1402–cysteine 1413, cysteine 1406–cysteine 1423, cysteine 1425–cysteine 1434, cysteine 1443–cysteine 1453, cysteine 1447–cysteine 1463, cysteine 1465–cysteine 1476, cysteine 1482–cysteine 1495, cysteine 1489–cysteine 1505, cysteine 1507–cysteine 1518, cysteine 1524–cysteine 1537, cysteine 1531–cysteine 1547, cysteine 1549–cysteine 1560, cysteine 1566–cysteine 1579, cysteine 1573–cysteine 1589, and cysteine 1591–cysteine 1602. N-linked (GlcNAc...) asparagine glycosylation is found at asparagine 1374 and asparagine 1386. 4 consecutive EGF-like domains span residues 1439–1477, 1478–1519, 1520–1561, and 1562–1603; these read TTDNCNGTCHTSANCLLDPDGKASCKCAAGFQGNGTVCT, AINA…IVCL, EINP…KVCT, and LINV…IVCR. A glycan (N-linked (GlcNAc...) asparagine) is linked at asparagine 1444. An N-linked (GlcNAc...) asparagine glycan is attached at asparagine 1472. N-linked (GlcNAc...) asparagine glycosylation is present at asparagine 1580. 2 FAS1 domains span residues 1603-1731 and 1747-1888; these read RGSI…DTLL and VLLN…DCLL. Residue asparagine 1750 is glycosylated (N-linked (GlcNAc...) asparagine). One can recognise a Laminin EGF-like 2 domain in the interval 1965-2030; the sequence is PDCQACPGGP…GCSEHGQCDE (66 aa). 17 cysteine pairs are disulfide-bonded: cysteine 1970–cysteine 1984, cysteine 1978–cysteine 1994, cysteine 1996–cysteine 2005, cysteine 2017–cysteine 2028, cysteine 2022–cysteine 2038, cysteine 2040–cysteine 2049, cysteine 2059–cysteine 2069, cysteine 2063–cysteine 2075, cysteine 2077–cysteine 2088, cysteine 2094–cysteine 2107, cysteine 2101–cysteine 2116, cysteine 2118–cysteine 2129, cysteine 2135–cysteine 2149, cysteine 2143–cysteine 2159, cysteine 2161–cysteine 2172, cysteine 2228–cysteine 2296, and cysteine 2252–cysteine 2273. Asparagine 2001 carries N-linked (GlcNAc...) asparagine glycosylation. EGF-like domains follow at residues 2055 to 2089, 2090 to 2130, and 2131 to 2173; these read VIPVCIPACSMHATCMENNTCVCNLNYEGDGITCT, VVDF…HSCT, and EIDP…RDCE. The N-linked (GlcNAc...) asparagine glycan is linked to asparagine 2072. The region spanning 2206–2298 is the Link domain; it reads GVFHLRSPLG…SEMWDVFCYR (93 aa). Asparagine 2287, asparagine 2303, asparagine 2375, asparagine 2391, and asparagine 2400 each carry an N-linked (GlcNAc...) asparagine glycan. The FAS1 7 domain maps to 2318-2452; it reads NGNLLQVLMS…GVLHIISEPL (135 aa). A helical transmembrane segment spans residues 2465-2485; the sequence is GLGTGIFCAVVLVTGAIALAA. Topologically, residues 2486–2559 are cytoplasmic; the sequence is YSYFRLNQRT…NSDPLGALRS (74 aa). A Phosphoserine modification is found at serine 2503. Residues 2510–2520 form an interaction with TMSB4X region; sequence LAFGKQQPESI. The interval 2514–2559 is disordered; that stretch reads KQQPESITNPLYETSTPAAPEPSCDPFTDSGERELENSDPLGALRS. Positions 2516–2530 are enriched in polar residues; it reads QPESITNPLYETSTP.

In terms of assembly, interacts with heparin, alpha-M/beta-2 integrin (ITGAM and ITGB2), and thymosin beta 4 (TMSB4X). Interacts with GULP1. Associates with clathrin and adapter protein AP-2; in liver sinusoidal endothelial cells (LSECs). Post-translationally, glycosylated. Proteolytically processed to yield a smaller protein. As to expression, expressed in endothelial sinuses of liver, lymph nodes, bone marrow, spleen and in specialised structures of eye, heart, brain and kidney. Expression is detected in corneal and lens epithelium, in mesenchymal cells of the heart valves, in the ependymal cells lining the ventricles in the brain, and in the prismatic epithelial cells covering the renal papillae.

The protein localises to the cytoplasm. The protein resides in the cell membrane. Phosphatidylserine receptor that enhances the engulfment of apoptotic cells. Hyaluronan receptor that binds to and mediates endocytosis of hyaluronic acid (HA). Also acts, in different species, as a primary systemic scavenger receptor for heparin (Hep), chondroitin sulfate (CS), dermatan sulfate (DS), nonglycosaminoglycan (GAG), acetylated low-density lipoprotein (AcLDL), pro-collagen propeptides and advanced glycation end products (AGE). May serve to maintain tissue integrity by supporting extracellular matrix turnover or it may contribute to maintaining fluidity of bodily liquids by resorption of hyaluronan. Counter receptor which plays an important role in lymphocyte recruitment in the hepatic vasculature. Binds to both Gram-positive and Gram-negative bacteria and may play a role in defense against bacterial infection. The proteolytically processed short form also functions as an endocytosis receptor for heparin internalization as well as HA and CS. This is Stabilin-2 from Mus musculus (Mouse).